The following is a 265-amino-acid chain: Putative methyltransferase 235L (265 aa).

The signal sequence occupies residues Met-1–Cys-17.

The protein belongs to the methyltransferase superfamily.

The polypeptide is Putative methyltransferase 235L (Acheta domesticus (House cricket)).